Here is a 749-residue protein sequence, read N- to C-terminus: Activating signal cointegrator 1 complex subunit 2 (749 aa).

Positions 1–26 are disordered; the sequence is MPALPLDQLQITHKDPKTGQPKTSAA. At threonine 233 the chain carries Phosphothreonine. The CUE domain maps to 465-508; it reads ELDSLISQVKDLLPDLGEGFILACLEHYSYDSEQVINNILEDRL. Disordered stretches follow at residues 606–675 and 689–749; these read EDEY…QDPA and LARK…MIPS. The residue at position 625 (serine 625) is a Phosphoserine. Residues 649 to 662 show a composition bias toward acidic residues; that stretch reads VQEEEWDEEDEVEE. Composition is skewed to basic and acidic residues over residues 663–675 and 711–726; these read EAPK…QDPA and QSRE…EANK.

Belongs to the ASCC2 family. In terms of assembly, identified in the ASCC complex that contains ASCC1, ASCC2 and ASCC3. Interacts directly with ASCC3. The ASCC complex interacts with ALKBH3. Interacts (via CUE domain) with 'Lys-63'-linked polyubiquitin chains, but not with 'Lys-48'-linked polyubiquitin chains. Part of the ASC-1 complex, that contains TRIP4, ASCC1, ASCC2 and ASCC3. Component of the RQT (ribosome quality control trigger) complex, that contains ASCC2, ASCC3 and TRIP4. Interacts with CSRP1. Interacts with PRPF8, a component of the spliceosome. Interacts with ZCCHC4.

It is found in the nucleus. It localises to the nucleus speckle. Ubiquitin-binding protein involved in DNA repair and rescue of stalled ribosomes. Plays a role in DNA damage repair as component of the ASCC complex. Recruits ASCC3 and ALKBH3 to sites of DNA damage by binding to polyubiquitinated proteins that have 'Lys-63'-linked polyubiquitin chains. Part of the ASC-1 complex that enhances NF-kappa-B, SRF and AP1 transactivation. Involved in activation of the ribosome quality control (RQC) pathway, a pathway that degrades nascent peptide chains during problematic translation. Specifically recognizes and binds RPS20/uS10 ubiquitinated by ZNF598, promoting recruitment of the RQT (ribosome quality control trigger) complex on stalled ribosomes, followed by disassembly of stalled ribosomes. This Mus musculus (Mouse) protein is Activating signal cointegrator 1 complex subunit 2 (Ascc2).